Here is a 1381-residue protein sequence, read N- to C-terminus: DNA-directed RNA polymerase subunit beta' (1381 aa).

Zn(2+)-binding residues include Cys70, Cys72, Cys85, and Cys88. Positions 461, 463, and 465 each coordinate Mg(2+). Zn(2+) contacts are provided by Cys801, Cys875, Cys882, and Cys885. Residues 1362-1381 form a disordered region; that stretch reads VEIEGDENSNKKSLDMHAAN. Over residues 1369–1381 the composition is skewed to basic and acidic residues; sequence NSNKKSLDMHAAN.

Belongs to the RNA polymerase beta' chain family. As to quaternary structure, the RNAP catalytic core consists of 2 alpha, 1 beta, 1 beta' and 1 omega subunit. When a sigma factor is associated with the core the holoenzyme is formed, which can initiate transcription. It depends on Mg(2+) as a cofactor. Zn(2+) serves as cofactor.

It catalyses the reaction RNA(n) + a ribonucleoside 5'-triphosphate = RNA(n+1) + diphosphate. DNA-dependent RNA polymerase catalyzes the transcription of DNA into RNA using the four ribonucleoside triphosphates as substrates. This Syntrophus aciditrophicus (strain SB) protein is DNA-directed RNA polymerase subunit beta'.